A 795-amino-acid chain; its full sequence is Histone acetyltransferase KAT2A (795 aa).

Polar residues predominate over residues 1–18 (MADPAAQSSAQPRLQQAQ). Positions 1–55 (MADPAAQSSAQPRLQQAQSSGPTGSNSNPGAGSSDPARPGLSQQQWSSQKKAQVR) are disordered. The segment covering 19-34 (SSGPTGSNSNPGAGSS) has biased composition (low complexity). In terms of domain architecture, N-acetyltransferase spans 461 to 614 (VIGNSLSQKS…GATLMECELN (154 aa)). Glu-533 serves as the catalytic Proton donor/acceptor. Acetyl-CoA is bound by residues 537–539 (CAV), 544–550 (QVKGYGT), and Tyr-575. Succinyl-CoA is bound by residues 537-539 (CAV), 544-550 (QVKGYGT), and Tyr-575. The loop 3 stretch occupies residues 597–606 (LGYIKDYEGA). In terms of domain architecture, Bromo spans 686 to 790 (KDPDLLYNML…KFFYFKLKEA (105 aa)).

This sequence belongs to the acetyltransferase family. GCN5 subfamily.

It localises to the nucleus. The protein localises to the chromosome. The protein resides in the cytoplasm. Its subcellular location is the cytoskeleton. It is found in the microtubule organizing center. It localises to the centrosome. The catalysed reaction is L-lysyl-[histone] + acetyl-CoA = N(6)-acetyl-L-lysyl-[histone] + CoA + H(+). It catalyses the reaction L-lysyl-[protein] + acetyl-CoA = N(6)-acetyl-L-lysyl-[protein] + CoA + H(+). The enzyme catalyses succinyl-CoA + L-lysyl-[protein] = N(6)-succinyl-L-lysyl-[protein] + CoA + H(+). It carries out the reaction glutaryl-CoA + L-lysyl-[protein] = N(6)-glutaryl-L-lysyl-[protein] + CoA + H(+). Functionally, protein lysine acyltransferase that can act as a acetyltransferase, glutaryltransferasesucc, succinyltransferase or malonyltransferase, depending on the context. Acts as a histone lysine succinyltransferase: catalyzes succinylation of histone H3 on 'Lys-79' (H3K79succ), with a maximum frequency around the transcription start sites of genes. Succinylation of histones gives a specific tag for epigenetic transcription activation. Association with the 2-oxoglutarate dehydrogenase complex, which provides succinyl-CoA, is required for histone succinylation. In different complexes, functions either as an acetyltransferase (HAT) or as a succinyltransferase: in the SAGA and ATAC complexes, acts as a histone acetyltransferase. Has significant histone acetyltransferase activity with core histones, but not with nucleosome core particles. Has a a strong preference for acetylation of H3 at 'Lys-9' (H3K9ac). Acetylation of histones gives a specific tag for epigenetic transcription activation. Also acetylates non-histone proteins, such as tbx5. Involved in heart and limb development by mediating acetylation of tbx5. Together with kat2b, required for growth and differentiation of craniofacial cartilage and bone by regulating acetylation of histone H3 at 'Lys-9' (H3K9ac). Also acts as a histone glutaryltransferase: catalyzes glutarylation of histone H4 on 'Lys-91' (H4K91glu), a mark that destabilizes nucleosomes by promoting dissociation of the H2A-H2B dimers from nucleosomes. The polypeptide is Histone acetyltransferase KAT2A (Danio rerio (Zebrafish)).